Here is a 354-residue protein sequence, read N- to C-terminus: tRNA-specific 2-thiouridylase MnmA (354 aa).

ATP-binding positions include 6–13 and Leu-33; that span reads LLSGGVDS. The Nucleophile role is filled by Cys-100. A disulfide bridge links Cys-100 with Cys-195. Gly-123 provides a ligand contact to ATP. An interaction with tRNA region spans residues 145–147; it reads KDQ. Cys-195 serves as the catalytic Cysteine persulfide intermediate.

This sequence belongs to the MnmA/TRMU family.

Its subcellular location is the cytoplasm. The enzyme catalyses S-sulfanyl-L-cysteinyl-[protein] + uridine(34) in tRNA + AH2 + ATP = 2-thiouridine(34) in tRNA + L-cysteinyl-[protein] + A + AMP + diphosphate + H(+). In terms of biological role, catalyzes the 2-thiolation of uridine at the wobble position (U34) of tRNA, leading to the formation of s(2)U34. The chain is tRNA-specific 2-thiouridylase MnmA from Borrelia turicatae (strain 91E135).